We begin with the raw amino-acid sequence, 174 residues long: RNA pyrophosphohydrolase (174 aa).

One can recognise a Nudix hydrolase domain in the interval 6–149 (GFRANVGIII…KRDVYRKVMK (144 aa)). Residues 38 to 59 (GGVDDGETAEEAMYRELYEEVG) carry the Nudix box motif.

The protein belongs to the Nudix hydrolase family. RppH subfamily. A divalent metal cation serves as cofactor.

In terms of biological role, accelerates the degradation of transcripts by removing pyrophosphate from the 5'-end of triphosphorylated RNA, leading to a more labile monophosphorylated state that can stimulate subsequent ribonuclease cleavage. The sequence is that of RNA pyrophosphohydrolase from Shewanella sp. (strain MR-7).